Consider the following 328-residue polypeptide: Putative thiosulfate sulfurtransferase mpst-1 (328 aa).

Rhodanese domains follow at residues Asn-22–Thr-162 and Lys-202–Ser-320. Cys-278 acts as the Cysteine persulfide intermediate in catalysis.

It carries out the reaction thiosulfate + hydrogen cyanide = thiocyanate + sulfite + 2 H(+). This chain is Putative thiosulfate sulfurtransferase mpst-1 (mpst-1), found in Caenorhabditis elegans.